The chain runs to 453 residues: Allantoinase (453 aa).

6 residues coordinate Zn(2+): His-59, His-61, Lys-146, His-186, His-242, and Asp-315. Position 146 is an N6-carboxylysine (Lys-146).

It belongs to the metallo-dependent hydrolases superfamily. Allantoinase family. Homotetramer. Zn(2+) is required as a cofactor. Carboxylation allows a single lysine to coordinate two zinc ions.

It carries out the reaction (S)-allantoin + H2O = allantoate + H(+). It participates in nitrogen metabolism; (S)-allantoin degradation; allantoate from (S)-allantoin: step 1/1. Functionally, catalyzes the conversion of allantoin (5-ureidohydantoin) to allantoic acid by hydrolytic cleavage of the five-member hydantoin ring. In Escherichia coli O127:H6 (strain E2348/69 / EPEC), this protein is Allantoinase.